The sequence spans 180 residues: uncharacterized protein (180 aa).

This is an uncharacterized protein from Rickettsia prowazekii (strain Madrid E).